Reading from the N-terminus, the 1225-residue chain is ABC transporter B family member 18 (1225 aa).

The next 6 membrane-spanning stretches (helical) occupy residues 23 to 43, 70 to 90, 146 to 168, 172 to 194, 252 to 272, and 284 to 304; these read MALG…IFFI, VALV…GYCW, LPNF…LLLW, IVGF…ALIR, GIAI…TWYG, and GTVS…GQSL. Positions 23–312 constitute an ABC transmembrane type-1 1 domain; sequence MALGLIGAVG…SLSNLKYFSE (290 aa). The 237-residue stretch at 347–583 folds into the ABC transporter 1 domain; the sequence is VEFNHVKFTY…LDGQYTSLVR (237 aa). Residue 382–389 participates in ATP binding; that stretch reads GGSGSGKS. N-linked (GlcNAc...) asparagine glycosylation occurs at N530. 2 helical membrane passes run 657 to 677 and 699 to 719; these read ALYG…YSYS and IYVL…ISQH. Residues 657–945 enclose the ABC transmembrane type-1 2 domain; the sequence is ALYGCLGAAL…AGTMTKDLVK (289 aa). The N-linked (GlcNAc...) asparagine glycan is linked to N754. The next 4 helical transmembrane spans lie at 780–800, 804–824, 880–900, and 919–939; these read LLVQ…VISW, IVMM…RVLL, SWLA…VSAL, and FLEI…AGTM. N-linked (GlcNAc...) asparagine glycosylation is found at N960 and N1000. In terms of domain architecture, ABC transporter 2 spans 980-1218; the sequence is ISFSNVDFAY…GPKGAYFSLV (239 aa). ATP is bound at residue 1015–1022; that stretch reads GPSGSGKS. The N-linked (GlcNAc...) asparagine glycan is linked to N1201.

It belongs to the ABC transporter superfamily. ABCB family. Multidrug resistance exporter (TC 3.A.1.201) subfamily.

It is found in the membrane. The protein is ABC transporter B family member 18 (ABCB18) of Arabidopsis thaliana (Mouse-ear cress).